The sequence spans 211 residues: Protein-L-isoaspartate O-methyltransferase 2 (211 aa).

Residue Ser-61 is part of the active site.

The protein belongs to the methyltransferase superfamily. L-isoaspartyl/D-aspartyl protein methyltransferase family.

It is found in the cytoplasm. It catalyses the reaction [protein]-L-isoaspartate + S-adenosyl-L-methionine = [protein]-L-isoaspartate alpha-methyl ester + S-adenosyl-L-homocysteine. Catalyzes the methyl esterification of L-isoaspartyl residues in peptides and proteins that result from spontaneous decomposition of normal L-aspartyl and L-asparaginyl residues. It plays a role in the repair and/or degradation of damaged proteins. The sequence is that of Protein-L-isoaspartate O-methyltransferase 2 from Polaromonas sp. (strain JS666 / ATCC BAA-500).